The sequence spans 363 residues: Flagellar P-ring protein (363 aa).

Residues 1–20 (MKLKLILAVAMLAFSLPSQA) form the signal peptide.

This sequence belongs to the FlgI family. As to quaternary structure, the basal body constitutes a major portion of the flagellar organelle and consists of four rings (L,P,S, and M) mounted on a central rod.

Its subcellular location is the periplasm. The protein localises to the bacterial flagellum basal body. Functionally, assembles around the rod to form the L-ring and probably protects the motor/basal body from shearing forces during rotation. This is Flagellar P-ring protein from Shewanella sp. (strain MR-4).